The following is a 155-amino-acid chain: Protein-export protein SecB (155 aa).

The protein belongs to the SecB family. In terms of assembly, homotetramer, a dimer of dimers. One homotetramer interacts with 1 SecA dimer.

Its subcellular location is the cytoplasm. Its function is as follows. One of the proteins required for the normal export of preproteins out of the cell cytoplasm. It is a molecular chaperone that binds to a subset of precursor proteins, maintaining them in a translocation-competent state. It also specifically binds to its receptor SecA. The protein is Protein-export protein SecB of Methylococcus capsulatus (strain ATCC 33009 / NCIMB 11132 / Bath).